The following is a 472-amino-acid chain: Chromosomal replication initiator protein DnaA (472 aa).

The tract at residues M1 to E73 is domain I, interacts with DnaA modulators. The tract at residues E73 to S128 is domain II. Residues V89–G127 form a disordered region. Basic and acidic residues predominate over residues A97–S112. Residues H113–A124 show a composition bias toward low complexity. A domain III, AAA+ region region spans residues P129–S351. ATP is bound by residues G176, G178, K179, and T180. The interval K352–E472 is domain IV, binds dsDNA.

Belongs to the DnaA family. In terms of assembly, oligomerizes as a right-handed, spiral filament on DNA at oriC.

The protein localises to the cytoplasm. Its function is as follows. Plays an essential role in the initiation and regulation of chromosomal replication. ATP-DnaA binds to the origin of replication (oriC) to initiate formation of the DNA replication initiation complex once per cell cycle. Binds the DnaA box (a 9 base pair repeat at the origin) and separates the double-stranded (ds)DNA. Forms a right-handed helical filament on oriC DNA; dsDNA binds to the exterior of the filament while single-stranded (ss)DNA is stabiized in the filament's interior. The ATP-DnaA-oriC complex binds and stabilizes one strand of the AT-rich DNA unwinding element (DUE), permitting loading of DNA polymerase. After initiation quickly degrades to an ADP-DnaA complex that is not apt for DNA replication. Binds acidic phospholipids. In Rhodopseudomonas palustris (strain BisB5), this protein is Chromosomal replication initiator protein DnaA.